Consider the following 326-residue polypeptide: Acetyl-coenzyme A carboxylase carboxyl transferase subunit alpha (326 aa).

A CoA carboxyltransferase C-terminal domain is found at 44–298 (KLETRAMQLR…KQALLDNLDE (255 aa)).

This sequence belongs to the AccA family. As to quaternary structure, acetyl-CoA carboxylase is a heterohexamer composed of biotin carboxyl carrier protein (AccB), biotin carboxylase (AccC) and two subunits each of ACCase subunit alpha (AccA) and ACCase subunit beta (AccD).

The protein resides in the cytoplasm. It carries out the reaction N(6)-carboxybiotinyl-L-lysyl-[protein] + acetyl-CoA = N(6)-biotinyl-L-lysyl-[protein] + malonyl-CoA. The protein operates within lipid metabolism; malonyl-CoA biosynthesis; malonyl-CoA from acetyl-CoA: step 1/1. Its function is as follows. Component of the acetyl coenzyme A carboxylase (ACC) complex. First, biotin carboxylase catalyzes the carboxylation of biotin on its carrier protein (BCCP) and then the CO(2) group is transferred by the carboxyltransferase to acetyl-CoA to form malonyl-CoA. The polypeptide is Acetyl-coenzyme A carboxylase carboxyl transferase subunit alpha (Trichormus variabilis (strain ATCC 29413 / PCC 7937) (Anabaena variabilis)).